The following is a 283-amino-acid chain: CDP-abequose synthase (283 aa).

Residues glycine 7–glycine 13, glutamate 48–phenylalanine 49, tyrosine 129, and lysine 133 contribute to the NAD(+) site. Tyrosine 129 functions as the Proton acceptor in the catalytic mechanism.

Belongs to the NAD(P)-dependent epimerase/dehydratase family.

It carries out the reaction CDP-alpha-D-abequose + NADP(+) = CDP-4-dehydro-3,6-dideoxy-alpha-D-glucose + NADPH + H(+). It functions in the pathway bacterial outer membrane biogenesis; LPS O-antigen biosynthesis. Its function is as follows. The CDP-abequose synthase is involved in lipopolysaccharides (LPS) synthesis containing abequose which are important antigens of the cell surface responsible for the serological O specificity. Derivatives of the 3,6-dideoxyhexose group have a particular highly immunogenic character. This Yersinia pseudotuberculosis protein is CDP-abequose synthase (rfbJ).